The primary structure comprises 430 residues: Serine--tRNA ligase (430 aa).

235 to 237 lines the L-serine pocket; that stretch reads TAE. ATP-binding positions include 266–268 and Val-282; that span reads RRE. Glu-289 is a binding site for L-serine. An ATP-binding site is contributed by 353 to 356; that stretch reads EASS. Residue Ser-389 coordinates L-serine.

The protein belongs to the class-II aminoacyl-tRNA synthetase family. Type-1 seryl-tRNA synthetase subfamily. As to quaternary structure, homodimer. The tRNA molecule binds across the dimer.

The protein resides in the cytoplasm. The enzyme catalyses tRNA(Ser) + L-serine + ATP = L-seryl-tRNA(Ser) + AMP + diphosphate + H(+). It carries out the reaction tRNA(Sec) + L-serine + ATP = L-seryl-tRNA(Sec) + AMP + diphosphate + H(+). Its pathway is aminoacyl-tRNA biosynthesis; selenocysteinyl-tRNA(Sec) biosynthesis; L-seryl-tRNA(Sec) from L-serine and tRNA(Sec): step 1/1. Its function is as follows. Catalyzes the attachment of serine to tRNA(Ser). Is also able to aminoacylate tRNA(Sec) with serine, to form the misacylated tRNA L-seryl-tRNA(Sec), which will be further converted into selenocysteinyl-tRNA(Sec). The sequence is that of Serine--tRNA ligase from Chlorobium luteolum (strain DSM 273 / BCRC 81028 / 2530) (Pelodictyon luteolum).